Reading from the N-terminus, the 196-residue chain is Holliday junction branch migration complex subunit RuvA (196 aa).

Positions 1 to 63 are domain I; the sequence is MYEYFKGIIS…EDAELLYGFA (63 aa). Residues 64–142 form a domain II region; sequence TEEEKQLFLS…AADGLAESKA (79 aa). Residues 143–146 form a flexible linker region; it reads PVQT. Residues 147-196 are domain III; it reads VDNQELEEAMEAMLALGYKATELKKIKKFFEGTTDTAENYIKSALKMLVK.

It belongs to the RuvA family. As to quaternary structure, homotetramer. Forms an RuvA(8)-RuvB(12)-Holliday junction (HJ) complex. HJ DNA is sandwiched between 2 RuvA tetramers; dsDNA enters through RuvA and exits via RuvB. An RuvB hexamer assembles on each DNA strand where it exits the tetramer. Each RuvB hexamer is contacted by two RuvA subunits (via domain III) on 2 adjacent RuvB subunits; this complex drives branch migration. In the full resolvosome a probable DNA-RuvA(4)-RuvB(12)-RuvC(2) complex forms which resolves the HJ.

The protein localises to the cytoplasm. The RuvA-RuvB-RuvC complex processes Holliday junction (HJ) DNA during genetic recombination and DNA repair, while the RuvA-RuvB complex plays an important role in the rescue of blocked DNA replication forks via replication fork reversal (RFR). RuvA specifically binds to HJ cruciform DNA, conferring on it an open structure. The RuvB hexamer acts as an ATP-dependent pump, pulling dsDNA into and through the RuvAB complex. HJ branch migration allows RuvC to scan DNA until it finds its consensus sequence, where it cleaves and resolves the cruciform DNA. The sequence is that of Holliday junction branch migration complex subunit RuvA from Streptococcus gordonii (strain Challis / ATCC 35105 / BCRC 15272 / CH1 / DL1 / V288).